We begin with the raw amino-acid sequence, 664 residues long: DNA ligase (664 aa).

NAD(+)-binding positions include 32-36 (DKEYD) and 80-81 (SL). Lys122 (N6-AMP-lysine intermediate) is an active-site residue. NAD(+) contacts are provided by Arg144, Glu178, and Lys314. Residues Cys407, Cys410, Cys423, and Cys429 each coordinate Zn(2+). The BRCT domain maps to 587–664 (IDENPFMDKT…NEEEFSNKIK (78 aa)).

It belongs to the NAD-dependent DNA ligase family. LigA subfamily. Mg(2+) serves as cofactor. The cofactor is Mn(2+).

The catalysed reaction is NAD(+) + (deoxyribonucleotide)n-3'-hydroxyl + 5'-phospho-(deoxyribonucleotide)m = (deoxyribonucleotide)n+m + AMP + beta-nicotinamide D-nucleotide.. Functionally, DNA ligase that catalyzes the formation of phosphodiester linkages between 5'-phosphoryl and 3'-hydroxyl groups in double-stranded DNA using NAD as a coenzyme and as the energy source for the reaction. It is essential for DNA replication and repair of damaged DNA. The protein is DNA ligase of Clostridium botulinum (strain Okra / Type B1).